A 145-amino-acid polypeptide reads, in one-letter code: uncharacterized protein (145 aa).

S67 is subject to Phosphoserine.

In terms of tissue distribution, expressed in retina and retinoblastoma.

This is an uncharacterized protein from Homo sapiens (Human).